A 133-amino-acid polypeptide reads, in one-letter code: Small ribosomal subunit protein uS8 (133 aa).

This sequence belongs to the universal ribosomal protein uS8 family. In terms of assembly, part of the 30S ribosomal subunit. Contacts proteins S5 and S12.

Its function is as follows. One of the primary rRNA binding proteins, it binds directly to 16S rRNA central domain where it helps coordinate assembly of the platform of the 30S subunit. The polypeptide is Small ribosomal subunit protein uS8 (Synechococcus sp. (strain WH7803)).